Here is a 130-residue protein sequence, read N- to C-terminus: Small ribosomal subunit protein uS8 (130 aa).

The protein belongs to the universal ribosomal protein uS8 family. In terms of assembly, part of the 30S ribosomal subunit. Contacts proteins S5 and S12.

Functionally, one of the primary rRNA binding proteins, it binds directly to 16S rRNA central domain where it helps coordinate assembly of the platform of the 30S subunit. This is Small ribosomal subunit protein uS8 from Cytophaga hutchinsonii (strain ATCC 33406 / DSM 1761 / CIP 103989 / NBRC 15051 / NCIMB 9469 / D465).